The chain runs to 260 residues: Small ribosomal subunit protein uS3 (260 aa).

Positions 39 to 114 constitute a KH type-2 domain; the sequence is LRQYIEQKLG…QIRINVVEVQ (76 aa). Residues 217–260 form a disordered region; it reads GQEPDPLPPASRDRERDPRDRDREPRRRQQQRRRQQFEDRSNEG. Basic and acidic residues-rich tracts occupy residues 227–243 and 251–260; these read SRDR…EPRR and QQFEDRSNEG.

It belongs to the universal ribosomal protein uS3 family. Part of the 30S ribosomal subunit. Forms a tight complex with proteins S10 and S14.

Functionally, binds the lower part of the 30S subunit head. Binds mRNA in the 70S ribosome, positioning it for translation. The chain is Small ribosomal subunit protein uS3 from Nostoc punctiforme (strain ATCC 29133 / PCC 73102).